The sequence spans 400 residues: Elongation factor Tu (400 aa).

A tr-type G domain is found at 10–210; it reads KPHCNVGTIG…VDSYIPIPPR (201 aa). Positions 19-26 are G1; the sequence is GHVDHGKT. 19-26 serves as a coordination point for GTP; the sequence is GHVDHGKT. Residue T26 coordinates Mg(2+). The G2 stretch occupies residues 60 to 64; the sequence is GLTIA. The segment at 81-84 is G3; it reads DCPG. GTP-binding positions include 81–85 and 136–139; these read DCPGH and NKCD. The segment at 136–139 is G4; that stretch reads NKCD. The G5 stretch occupies residues 174 to 176; it reads SAI.

The protein belongs to the TRAFAC class translation factor GTPase superfamily. Classic translation factor GTPase family. EF-Tu/EF-1A subfamily. In terms of assembly, monomer.

Its subcellular location is the cytoplasm. It catalyses the reaction GTP + H2O = GDP + phosphate + H(+). Its function is as follows. GTP hydrolase that promotes the GTP-dependent binding of aminoacyl-tRNA to the A-site of ribosomes during protein biosynthesis. This chain is Elongation factor Tu, found in Dehalococcoides mccartyi (strain ATCC BAA-2266 / KCTC 15142 / 195) (Dehalococcoides ethenogenes (strain 195)).